The sequence spans 444 residues: uncharacterized protein (444 aa).

12 helical membrane passes run P2 to L22, T24 to N44, T52 to G72, F106 to Y126, M134 to L154, V174 to N194, F228 to F248, I261 to Y281, I305 to G325, L343 to A363, A377 to C397, and L424 to M444.

Belongs to the GntP permease family.

It is found in the cell membrane. This is an uncharacterized protein from Bacillus subtilis (strain 168).